A 432-amino-acid polypeptide reads, in one-letter code: Tryptophan--tRNA ligase (432 aa).

ATP is bound by residues 13 to 15 (TTS) and 21 to 22 (GN). Residues 14–22 (TSGTPHLGN) carry the 'HIGH' region motif. An L-tryptophan-binding site is contributed by D146. ATP is bound by residues 158–160 (GRD), L198, and 205–209 (KMSKS). The short motif at 205–209 (KMSKS) is the 'KMSKS' region element.

Belongs to the class-I aminoacyl-tRNA synthetase family. In terms of assembly, homodimer.

It is found in the cytoplasm. It catalyses the reaction tRNA(Trp) + L-tryptophan + ATP = L-tryptophyl-tRNA(Trp) + AMP + diphosphate + H(+). Its function is as follows. Catalyzes the attachment of tryptophan to tRNA(Trp). This is Tryptophan--tRNA ligase from Xanthomonas axonopodis pv. citri (strain 306).